The sequence spans 557 residues: Urocanate hydratase (557 aa).

NAD(+)-binding positions include 53 to 54 (GG), glutamine 131, 177 to 179 (GMG), glutamate 197, arginine 202, 243 to 244 (NA), 264 to 268 (QTSAH), 274 to 275 (YL), and tyrosine 323. Cysteine 411 is an active-site residue. Position 493 (glycine 493) interacts with NAD(+).

This sequence belongs to the urocanase family. NAD(+) serves as cofactor.

Its subcellular location is the cytoplasm. The enzyme catalyses 4-imidazolone-5-propanoate = trans-urocanate + H2O. Its pathway is amino-acid degradation; L-histidine degradation into L-glutamate; N-formimidoyl-L-glutamate from L-histidine: step 2/3. Catalyzes the conversion of urocanate to 4-imidazolone-5-propionate. This chain is Urocanate hydratase, found in Pseudomonas putida (strain ATCC 700007 / DSM 6899 / JCM 31910 / BCRC 17059 / LMG 24140 / F1).